A 320-amino-acid chain; its full sequence is Phosphoribosylaminoimidazole-succinocarboxamide synthase (320 aa).

The disordered stretch occupies residues 283 to 303 (ESDWDRNSPPPPLPESIAHQT).

Belongs to the SAICAR synthetase family.

The catalysed reaction is 5-amino-1-(5-phospho-D-ribosyl)imidazole-4-carboxylate + L-aspartate + ATP = (2S)-2-[5-amino-1-(5-phospho-beta-D-ribosyl)imidazole-4-carboxamido]succinate + ADP + phosphate + 2 H(+). It functions in the pathway purine metabolism; IMP biosynthesis via de novo pathway; 5-amino-1-(5-phospho-D-ribosyl)imidazole-4-carboxamide from 5-amino-1-(5-phospho-D-ribosyl)imidazole-4-carboxylate: step 1/2. In Rhodopirellula baltica (strain DSM 10527 / NCIMB 13988 / SH1), this protein is Phosphoribosylaminoimidazole-succinocarboxamide synthase.